The following is a 241-amino-acid chain: Zinc finger CCHC domain-containing protein 24 (241 aa).

Phosphoserine occurs at positions 65 and 93. The CCHC-type zinc finger occupies 132–149 (YLCHLCFNKGHYIKDCPQ).

This Homo sapiens (Human) protein is Zinc finger CCHC domain-containing protein 24 (ZCCHC24).